The chain runs to 365 residues: Chorismate synthase (365 aa).

NADP(+)-binding residues include R48 and R54. FMN is bound by residues 131 to 133 (RSS), 243 to 244 (NA), G288, 303 to 307 (KPTSS), and R329.

Belongs to the chorismate synthase family. In terms of assembly, homotetramer. The cofactor is FMNH2.

The catalysed reaction is 5-O-(1-carboxyvinyl)-3-phosphoshikimate = chorismate + phosphate. It participates in metabolic intermediate biosynthesis; chorismate biosynthesis; chorismate from D-erythrose 4-phosphate and phosphoenolpyruvate: step 7/7. Catalyzes the anti-1,4-elimination of the C-3 phosphate and the C-6 proR hydrogen from 5-enolpyruvylshikimate-3-phosphate (EPSP) to yield chorismate, which is the branch point compound that serves as the starting substrate for the three terminal pathways of aromatic amino acid biosynthesis. This reaction introduces a second double bond into the aromatic ring system. This chain is Chorismate synthase, found in Agrobacterium fabrum (strain C58 / ATCC 33970) (Agrobacterium tumefaciens (strain C58)).